A 1480-amino-acid polypeptide reads, in one-letter code: Cystic fibrosis transmembrane conductance regulator (1480 aa).

The Cytoplasmic segment spans residues 1 to 77 (MQRSPLEKAS…KLINALRRCF (77 aa)). The helical transmembrane segment at 78–98 (FWRFMFYGIFLYLGEVTKAVQ) threads the bilayer. Residues 81 to 365 (FMFYGIFLYL…WAVQTWYDSL (285 aa)) form the ABC transmembrane type-1 1 domain. The Extracellular segment spans residues 99–122 (PLLLGRIIASYDPDNKEERSIAIY). A helical membrane pass occupies residues 123-146 (LGIGLCLLFIVRTLLLHPAIFGLH). The Cytoplasmic segment spans residues 147–195 (HIGMQMRIAMFSLIYKKTLKLSSRVLDKISIGQLVSLLSNNLNKFDEGL). A helical transmembrane segment spans residues 196–216 (ALAHFVWIAPLQVALLMGLIW). Over 217–222 (ELLQAS) the chain is Extracellular. Residues 223-243 (AFCGLGFLIVLALFQAGLGRM) traverse the membrane as a helical segment. Residues 244–298 (MMKYRDQRAGKISERLVITSEMIENIQSVKAYCWEEAMEKMIENLRQTELKLTRK) are Cytoplasmic-facing. Residues 299–319 (AAYVRYFNSSAFFFSGFFVVF) form a helical membrane-spanning segment. Over 320-339 (LSVLPYALIKGIILRKIFTT) the chain is Extracellular. Residues 340–358 (ISFCIVLRMAVTRQFPWAV) traverse the membrane as a helical segment. The Cytoplasmic portion of the chain corresponds to 359 to 858 (QTWYDSLGAI…YLRYITVHKS (500 aa)). ATP contacts are provided by residues W401, S434, 458–465 (GSTGAGKT), and Q493. One can recognise an ABC transporter 1 domain in the interval 423–646 (NGDDSLFFSN…QPDFSSKLMG (224 aa)). Residue C524 is the site of S-palmitoyl cysteine attachment. S549 is subject to Phosphoserine. The interval 654-831 (SAERRNSILT…EEINEEDLKE (178 aa)) is disordered R region. S660 and S670 each carry phosphoserine; by PKA. Residue S686 is modified to Phosphoserine; by PKC. Residue K688 forms a Glycyl lysine isopeptide (Lys-Gly) (interchain with G-Cter in ubiquitin) linkage. A phosphoserine; by PKA mark is found at S700 and S712. T717 carries the post-translational modification Phosphothreonine. S737, S753, and S768 each carry phosphoserine; by PKA. The residue at position 790 (S790) is a Phosphoserine; by PKC. Phosphoserine; by PKA occurs at positions 795 and 813. A helical transmembrane segment spans residues 859–879 (LIFVLIWCLVIFLAEVAASLV). The region spanning 859–1155 (LIFVLIWCLV…AVNSSIDVDS (297 aa)) is the ABC transmembrane type-1 2 domain. Residues 880-918 (VLWLLGNTPLQDKGNSTHSRNNSYAVIITSTSSYYVFYI) are Extracellular-facing. N-linked (GlcNAc...) asparagine glycans are attached at residues N894 and N900. The discontinuously helical transmembrane segment at 919–939 (YVGVADTLLAMGFFRGLPLVH) threads the bilayer. Topologically, residues 940–990 (TLITVSKILHHKMLHSVLQAPMSTLNTLKAGGILNRFSKDIAILDDLLPLT) are cytoplasmic. The chain crosses the membrane as a helical span at residues 991 to 1011 (IFDFIQLLLIVIGAIAVVAVL). The Extracellular segment spans residues 1012–1013 (QP). Residues 1014-1034 (YIFVATVPVIVAFIMLRAYFL) traverse the membrane as a helical segment. The Cytoplasmic segment spans residues 1035 to 1095 (QTSQQLKQLE…TANWFLYLST (61 aa)). The helical transmembrane segment at 1096–1116 (LRWFQMRIEMIFVIFFIAVTF) threads the bilayer. Over 1117–1130 (ISILTTGEGEGRVG) the chain is Extracellular. Residues 1131-1151 (IILTLAMNIMSTLQWAVNSSI) form a helical membrane-spanning segment. At 1152–1480 (DVDSLMRSVS…TEEEVQDTRL (329 aa)) the chain is on the cytoplasmic side. One can recognise an ABC transporter 2 domain in the interval 1210 to 1443 (MTVKDLTAKY…RSLFRQAISP (234 aa)). Residues Y1219 and 1244 to 1251 (GRTGSGKS) each bind ATP. An interaction with GORASP2 region spans residues 1386-1480 (RTLKQAFADC…TEEEVQDTRL (95 aa)). A lipid anchor (S-palmitoyl cysteine) is attached at C1395. S1444 and S1456 each carry phosphoserine. A disordered region spans residues 1452–1480 (HRNSSKCKSKPQIAALKEETEEEVQDTRL). A compositionally biased stretch (acidic residues) spans 1470 to 1480 (ETEEEVQDTRL). The short motif at 1478 to 1480 (TRL) is the PDZ-binding element.

This sequence belongs to the ABC transporter superfamily. ABCC family. CFTR transporter (TC 3.A.1.202) subfamily. Monomer; does not require oligomerization for channel activity. May form oligomers in the membrane. Interacts with SLC26A3, SLC26A6 and SHANK2. Interacts with NHERF1 and MYO6. Interacts (via C-terminus) with GOPC (via PDZ domain); this promotes CFTR internalization and thereby decreases channel activity. Interacts with SLC4A7 through NHERF1. Found in a complex with MYO5B and RAB11A. Interacts with ANO1. Interacts with SLC26A8. Interacts with AHCYL1; the interaction increases CFTR activity. Interacts with CSE1L. The core-glycosylated form interacts with GORASP2 (via PDZ GRASP-type 1 domain) in respone to ER stress. Interacts with MARCHF2; the interaction leads to CFTR ubiqtuitination and degradation. Interacts with ADGRG2. N-glycosylated. In terms of processing, phosphorylated; cAMP treatment promotes phosphorylation and activates the channel. Dephosphorylation decreases the ATPase activity (in vitro). Phosphorylation at PKA sites activates the channel. Phosphorylation at PKC sites enhances the response to phosphorylation by PKA. Phosphorylated by AMPK; this inhibits channel activity. Post-translationally, ubiquitinated, leading to its degradation in the lysosome. Deubiquitination by USP10 in early endosomes enhances its endocytic recycling to the cell membrane. Ubiquitinated by RNF185 during ER stress. Ubiquitinated by MARCHF2. In terms of tissue distribution, expressed in the respiratory airway, including bronchial epithelium, and in the female reproductive tract, including oviduct (at protein level). Detected in pancreatic intercalated ducts in the exocrine tissue, on epithelial cells in intralobular striated ducts in sublingual salivary glands, on apical membranes of crypt cells throughout the small and large intestine, and on the reabsorptive duct in eccrine sweat glands. Detected on the equatorial segment of the sperm head (at protein level). Detected in nasal and bronchial superficial epithelium. Expressed by the central cells on the sebaceous glands, dermal adipocytes and, at lower levels, by epithelial cells.

The protein localises to the apical cell membrane. The protein resides in the early endosome membrane. It localises to the cell membrane. It is found in the recycling endosome membrane. Its subcellular location is the endoplasmic reticulum membrane. The protein localises to the nucleus. The catalysed reaction is ATP + H2O + closed Cl(-) channel = ADP + phosphate + open Cl(-) channel.. The enzyme catalyses chloride(in) = chloride(out). It catalyses the reaction hydrogencarbonate(in) = hydrogencarbonate(out). It carries out the reaction ATP + H2O = ADP + phosphate + H(+). In terms of biological role, epithelial ion channel that plays an important role in the regulation of epithelial ion and water transport and fluid homeostasis. Mediates the transport of chloride ions across the cell membrane. Possesses an intrinsic ATPase activity and utilizes ATP to gate its channel; the passive flow of anions through the channel is gated by cycles of ATP binding and hydrolysis by the ATP-binding domains. The ion channel is also permeable to HCO(3)(-); selectivity depends on the extracellular chloride concentration. In vitro, mediates ATP-dependent glutathione flux. Exerts its function also by modulating the activity of other ion channels and transporters. Plays an important role in airway fluid homeostasis. Contributes to the regulation of the pH and the ion content of the airway surface fluid layer and thereby plays an important role in defense against pathogens. Modulates the activity of the epithelial sodium channel (ENaC) complex, in part by regulating the cell surface expression of the ENaC complex. Inhibits the activity of the ENaC channel containing subunits SCNN1A, SCNN1B and SCNN1G. Inhibits the activity of the ENaC channel containing subunits SCNN1D, SCNN1B and SCNN1G, but not of the ENaC channel containing subunits SCNN1A, SCNN1B and SCNN1G. May regulate bicarbonate secretion and salvage in epithelial cells by regulating the transporter SLC4A7. Can inhibit the chloride channel activity of ANO1. Plays a role in the chloride and bicarbonate homeostasis during sperm epididymal maturation and capacitation. The chain is Cystic fibrosis transmembrane conductance regulator from Homo sapiens (Human).